The sequence spans 346 residues: Arsenite methyltransferase (346 aa).

Belongs to the methyltransferase superfamily. Arsenite methyltransferase family.

The catalysed reaction is arsenic triglutathione + [thioredoxin]-dithiol + S-adenosyl-L-methionine + 2 H2O = methylarsonous acid + [thioredoxin]-disulfide + 3 glutathione + S-adenosyl-L-homocysteine + H(+). It catalyses the reaction arsenic triglutathione + 2 [thioredoxin]-dithiol + 2 S-adenosyl-L-methionine + H2O = dimethylarsinous acid + 2 [thioredoxin]-disulfide + 3 glutathione + 2 S-adenosyl-L-homocysteine + 2 H(+). It carries out the reaction arsenic triglutathione + 3 [thioredoxin]-dithiol + 3 S-adenosyl-L-methionine = trimethylarsine + 3 [thioredoxin]-disulfide + 3 glutathione + 3 S-adenosyl-L-homocysteine + 3 H(+). Catalyzes the transfer of a methyl group from AdoMet to arsenite, producing methylated arsenicals. Involved in the conversion of As(III) to dimethylarsenate as the main product in the medium and also produces dimethylarsine and trimethylarsine gases. Reduces the arsenic toxicity in the cell and may contribute to the global arsenic cycling. The sequence is that of Arsenite methyltransferase from Aquipseudomonas alcaligenes (strain ATCC 14909 / DSM 50342 / CCUG 1425 / JCM 20561 / NBRC 14159 / NCIMB 9945 / NCTC 10367 / 1577) (Pseudomonas alcaligenes).